We begin with the raw amino-acid sequence, 541 residues long: Reticulophagy regulator 2 (541 aa).

Helical transmembrane passes span 75–91, 99–115, and 199–219; these read LHSL…FWLL, FFLL…LDLW, and VPGI…PLVV. The segment at 249-282 is disordered; it reads LHHKHDKRKRQGKNAPPAGDEPLAETESESEAEL. Basic residues predominate over residues 250 to 260; sequence HHKHDKRKRQG. Over residues 270 to 280 the composition is skewed to acidic residues; it reads PLAETESESEA. A Phosphothreonine modification is found at Thr-274. A phosphoserine mark is found at Ser-276, Ser-278, Ser-286, and Ser-306. Thr-329 bears the Phosphothreonine mark. Disordered regions lie at residues 331-389, 403-440, and 459-481; these read VSED…ADKE, THFN…APSS, and PSVL…EEEA. 3 positions are modified to phosphoserine: Ser-332, Ser-339, and Ser-342. Over residues 459–475 the composition is skewed to low complexity; it reads PSVLPSLPQDSPQALTA. The short motif at 485 to 490 is the LIR motif element; the sequence is EDFELL. Residues 496 to 541 form a disordered region; sequence EQLNAELGLGPEMPPKPPDVLPPPPLGPDSHSLVQSDQEAHAVVEP. Pro residues predominate over residues 507–522; the sequence is EMPPKPPDVLPPPPLG.

This sequence belongs to the RETREG family. In terms of assembly, interacts with ATG8 family modifier proteins MAP1LC3A, MAP1LC3B, GABARAP, GABARAPL1 and GABARAPL2. Interacts with CANX.

The protein localises to the endoplasmic reticulum membrane. Endoplasmic reticulum (ER)-anchored autophagy regulator which exists in an inactive state under basal conditions but is activated following cellular stress. When activated, induces ER fragmentation and mediates ER delivery into lysosomes through sequestration into autophagosomes via interaction with ATG8 family proteins. Required for collagen quality control in a LIR motif-independent manner. This chain is Reticulophagy regulator 2 (Retreg2), found in Rattus norvegicus (Rat).